The chain runs to 993 residues: MPALARDGGQLPLLVVFSAMIFGTITNQDLPVIKCVLINHKNNDSSVGKSSSYPMVSESPEDLGCALRPQSSGTVYEAAAVEVDVSASITLQVLVDAPGNISCLWVFKHSSLNCQPHFDLQNRGVVSMVILKMTETQAGEYLLFIQSEATNYTILFTVSIRNTLLYTLRRPYFRKMENQDALVCISESVPEPIVEWVLCDSQGESCKEESPAVVKKEEKVLHELFGTDIRCCARNELGRECTRLFTIDLNQTPQTTLPQLFLKVGEPLWIRCKAVHVNHGFGLTWELENKALEEGNYFEMSTYSTNRTMIRILFAFVSSVARNDTGYYTCSSSKHPSQSALVTIVEKGFINATNSSEDYEIDQYEEFCFSVRFKAYPQIRCTWTFSRKSFPCEQKGLDNGYSISKFCNHKHQPGEYIFHAENDDAQFTKMFTLNIRRKPQVLAEASASQASCFSDGYPLPSWTWKKCSDKSPNCTEEITEGVWNRKANRKVFGQWVSSSTLNMSEAIKGFLVKCCAYNSLGTSCETILLNSPGPFPFIQDNISFYATIGVCLLFIVVLTLLICHKYKKQFRYESQLQMVQVTGSSDNEYFYVDFREYEYDLKWEFPRENLEFGKVLGSGAFGKVMNATAYGISKTGVSIQVAVKMLKEKADSSEREALMSELKMMTQLGSHENIVNLLGACTLSGPIYLIFEYCCYGDLLNYLRSKREKFHRTWTEIFKEHNFSFYPTFQSHPNSSMPGSREVQIHPDSDQISGLHGNSFHSEDEIEYENQKRLEEEEDLNVLTFEDLLCFAYQVAKGMEFLEFKSCVHRDLAARNVLVTHGKVVKICDFGLARDIMSDSNYVVRGNARLPVKWMAPESLFEGIYTIKSDVWSYGILLWEIFSLGVNPYPGIPVDANFYKLIQNGFKMDQPFYATEEIYIIMQSCWAFDSRKRPSFPNLTSFLGCQLADAEEAMYQNVDGRVSECPHTYQNRRPFSREMDLGLLSPQAQVEDS.

Positions 1-26 (MPALARDGGQLPLLVVFSAMIFGTIT) are cleaved as a signal peptide. The Extracellular segment spans residues 27-543 (NQDLPVIKCV…PFPFIQDNIS (517 aa)). A disulfide bond links cysteine 35 and cysteine 65. N-linked (GlcNAc...) asparagine glycans are attached at residues asparagine 43 and asparagine 100. The cysteines at positions 103 and 114 are disulfide-linked. Asparagine 151 is a glycosylation site (N-linked (GlcNAc...) asparagine). 3 disulfides stabilise this stretch: cysteine 199–cysteine 206, cysteine 232–cysteine 241, and cysteine 272–cysteine 330. The 91-residue stretch at 253-343 (PQTTLPQLFL…KHPSQSALVT (91 aa)) folds into the Ig-like C2-type domain. N-linked (GlcNAc...) asparagine glycans are attached at residues asparagine 306, asparagine 323, asparagine 351, and asparagine 354. Intrachain disulfides connect cysteine 368–cysteine 407 and cysteine 381–cysteine 392. 3 N-linked (GlcNAc...) asparagine glycosylation sites follow: asparagine 473, asparagine 502, and asparagine 541. Residues 544-563 (FYATIGVCLLFIVVLTLLIC) traverse the membrane as a helical segment. Topologically, residues 564–993 (HKYKKQFRYE…LSPQAQVEDS (430 aa)) are cytoplasmic. A Phosphotyrosine modification is found at tyrosine 572. Serine 574 bears the Phosphoserine mark. Residues tyrosine 589, tyrosine 591, and tyrosine 599 each carry the phosphotyrosine; by autocatalysis modification. The important for normal regulation of the kinase activity and for maintaining the kinase in an inactive state in the absence of bound ligand stretch occupies residues 591-597 (YVDFREY). Residues 610–943 (LEFGKVLGSG…PSFPNLTSFL (334 aa)) enclose the Protein kinase domain. ATP contacts are provided by residues 616–624 (LGSGAFGKV) and lysine 644. Tyrosine 726 is modified (phosphotyrosine; by autocatalysis). Residue serine 759 is modified to Phosphoserine. Residues tyrosine 768 and tyrosine 793 each carry the phosphotyrosine modification. Catalysis depends on aspartate 811, which acts as the Proton acceptor. 3 positions are modified to phosphotyrosine; by autocatalysis: tyrosine 842, tyrosine 955, and tyrosine 969. The residue at position 993 (serine 993) is a Phosphoserine.

The protein belongs to the protein kinase superfamily. Tyr protein kinase family. CSF-1/PDGF receptor subfamily. As to quaternary structure, monomer in the absence of bound FLT3LG. Homodimer in the presence of bound FLT3LG. Interacts with FIZ1 following ligand activation. Interacts with FES, FER, LYN, FGR, HCK, SRC and GRB2. Interacts with PTPRJ/DEP-1 and PTPN11/SHP2. Interacts with RNF115 and RNF126. (Microbial infection) Interacts with human cytomegalovirus protein UL7. In terms of processing, N-glycosylated, contains complex N-glycans with sialic acid. Post-translationally, autophosphorylated on several tyrosine residues in response to FLT3LG binding. FLT3LG binding also increases phosphorylation of mutant kinases that are constitutively activated. Dephosphorylated by PTPRJ/DEP-1, PTPN1, PTPN6/SHP-1, and to a lesser degree by PTPN12. Dephosphorylation is important for export from the endoplasmic reticulum and location at the cell membrane. Rapidly ubiquitinated by UBE2L6 and the E3 ubiquitin-protein ligase SIAH1 after autophosphorylation, leading to its proteasomal degradation. In terms of tissue distribution, detected in bone marrow, in hematopoietic stem cells, in myeloid progenitor cells and in granulocyte/macrophage progenitor cells (at protein level). Detected in bone marrow, liver, thymus, spleen and lymph node, and at low levels in kidney and pancreas. Highly expressed in T-cell leukemia.

Its subcellular location is the membrane. The protein localises to the endoplasmic reticulum lumen. The catalysed reaction is L-tyrosyl-[protein] + ATP = O-phospho-L-tyrosyl-[protein] + ADP + H(+). Present in an inactive conformation in the absence of bound ligand. FLT3LG binding leads to dimerization and activation by autophosphorylation. Its function is as follows. Tyrosine-protein kinase that acts as a cell-surface receptor for the cytokine FLT3LG and regulates differentiation, proliferation and survival of hematopoietic progenitor cells and of dendritic cells. Promotes phosphorylation of SHC1 and AKT1, and activation of the downstream effector MTOR. Promotes activation of RAS signaling and phosphorylation of downstream kinases, including MAPK1/ERK2 and/or MAPK3/ERK1. Promotes phosphorylation of FES, FER, PTPN6/SHP, PTPN11/SHP-2, PLCG1, and STAT5A and/or STAT5B. Activation of wild-type FLT3 causes only marginal activation of STAT5A or STAT5B. Mutations that cause constitutive kinase activity promote cell proliferation and resistance to apoptosis via the activation of multiple signaling pathways. The chain is Receptor-type tyrosine-protein kinase FLT3 (FLT3) from Homo sapiens (Human).